Reading from the N-terminus, the 96-residue chain is UPF0166 protein aq_448 (96 aa).

The protein belongs to the UPF0166 family.

The sequence is that of UPF0166 protein aq_448 from Aquifex aeolicus (strain VF5).